Consider the following 284-residue polypeptide: Phosphonates import ATP-binding protein PhnC 2 (284 aa).

The ABC transporter domain occupies 24–264; sequence IRIDGISVRR…LEARIFPSLA (241 aa). 56 to 63 contacts ATP; that stretch reads GPSGVGKT.

Belongs to the ABC transporter superfamily. Phosphonates importer (TC 3.A.1.9.1) family. As to quaternary structure, the complex is composed of two ATP-binding proteins (PhnC), two transmembrane proteins (PhnE) and a solute-binding protein (PhnD).

The protein localises to the cell inner membrane. It catalyses the reaction phosphonate(out) + ATP + H2O = phosphonate(in) + ADP + phosphate + H(+). Part of the ABC transporter complex PhnCDE involved in phosphonates import. Responsible for energy coupling to the transport system. This is Phosphonates import ATP-binding protein PhnC 2 from Rhodopseudomonas palustris (strain ATCC BAA-98 / CGA009).